The primary structure comprises 507 residues: MFS transporter fsa7 (507 aa).

Residues 1 to 65 (MATKDPAVTT…PDDPEHPLNW (65 aa)) are disordered. N-linked (GlcNAc...) asparagine glycosylation occurs at asparagine 64. A helical transmembrane segment spans residues 72–92 (LHLVIVSLFTLAANLAATMFA). Residue asparagine 106 is glycosylated (N-linked (GlcNAc...) asparagine). The next 5 helical transmembrane spans lie at 111-131 (AMTV…LAPL), 146-166 (FVYI…MFLV), 169-189 (IICG…VADL), 200-220 (ALFT…GGFV), and 228-248 (WTFR…VIFM). The N-linked (GlcNAc...) asparagine glycan is linked to asparagine 252. 6 helical membrane passes run 302 to 322 (PIVL…FLLF), 341 to 361 (GLAY…FSVL), 379 to 399 (LILM…YGWT), 406 to 426 (WIVP…VVIP), 429 to 449 (IYLV…ANLL), and 472 to 492 (GWGN…PWFF).

It belongs to the major facilitator superfamily.

Its subcellular location is the cell membrane. Its function is as follows. Efflux pump that might be required for efficient secretion of fusarisetin A or other secondary metabolies produced by the fusarisetin A gene cluster. The polypeptide is MFS transporter fsa7 (Fusarium sp. (strain FN080326)).